The following is an 894-amino-acid chain: Protein SEY1 homolog (894 aa).

Composition is skewed to low complexity over residues 1–10 and 36–48; these read MSEEITTNQT and VQEQQEQQQQEQQ. Residues 1–97 form a disordered region; sequence MSEEITTNQT…QKQQTQEQEH (97 aa). The Cytoplasmic portion of the chain corresponds to 1–800; sequence MSEEITTNQT…EQNRLTSGGG (800 aa). Residues 21-60 adopt a coiled-coil conformation; that stretch reads RLSNENIKQEDEEQQVQEQQEQQQQEQQEQIDDQDTQQQE. Over residues 49-65 the composition is skewed to acidic residues; sequence EQIDDQDTQQQEDEFVV. Over residues 78–93 the composition is skewed to low complexity; it reads TPTLQETPQQQKQQTQ. The GB1/RHD3-type G domain occupies 138–361; the sequence is GFDYSVISIL…ADSFIPKRKY (224 aa). A GTP-binding site is contributed by 148–155; it reads GPQSSGKS. A helical membrane pass occupies residues 801–821; the sequence is VPGYMIILLCVLGFNEFISII. At 822–824 the chain is on the lumenal side; sequence SSP. A helical membrane pass occupies residues 825 to 845; that stretch reads LLLLLTILLGGVGFVLFKLGL. The Cytoplasmic portion of the chain corresponds to 846–894; the sequence is AGPFIDYSSQILVHFISKVKDIVLHVEQLQEQNHNNNNNNNNTPKQKRE.

The protein belongs to the TRAFAC class dynamin-like GTPase superfamily. GB1/RHD3 GTPase family. RHD3 subfamily.

The protein resides in the endoplasmic reticulum membrane. Its function is as follows. Probable GTP-binding protein that may be involved in cell development. This is Protein SEY1 homolog from Dictyostelium discoideum (Social amoeba).